The chain runs to 490 residues: Protein twist (490 aa).

Disordered stretches follow at residues 48–74, 98–167, and 330–359; these read QLQHQQQHLHSHQHHQQHQQQQQQHTQ, PSNE…TGGS, and LDGSDAGGKAFRKPRRRLKRKPSKTEETDE. A compositionally biased stretch (basic residues) spans 54–64; the sequence is QHLHSHQHHQQ. Composition is skewed to low complexity over residues 65 to 74 and 104 to 135; these read HQQQQQQHTQ and STSSNQSAQSTSLEMNNNNTSSNNTSSGNNPS. Positions 339-351 are enriched in basic residues; sequence AFRKPRRRLKRKP. The region spanning 362–413 is the bHLH domain; that stretch reads NQRVMANVRERQRTQSLNDAFKSLQQIIPTLPSDKLSKIQTLKLATRYIDFL.

In terms of assembly, efficient DNA binding requires dimerization with another bHLH protein. Homodimer.

The protein localises to the nucleus. Functionally, involved in the establishment and dorsoventral patterning of germ layers in the embryo. This chain is Protein twist, found in Drosophila erecta (Fruit fly).